Here is a 336-residue protein sequence, read N- to C-terminus: Ferrochelatase (336 aa).

The Fe cation site is built by histidine 206 and glutamate 287.

It belongs to the ferrochelatase family.

It is found in the cytoplasm. It catalyses the reaction heme b + 2 H(+) = protoporphyrin IX + Fe(2+). It participates in porphyrin-containing compound metabolism; protoheme biosynthesis; protoheme from protoporphyrin-IX: step 1/1. In terms of biological role, catalyzes the ferrous insertion into protoporphyrin IX. This Neisseria meningitidis serogroup A / serotype 4A (strain DSM 15465 / Z2491) protein is Ferrochelatase.